The sequence spans 224 residues: Phosphoribosylformylglycinamidine synthase subunit PurQ (224 aa).

Residues 4–224 (FGIIVFPGSN…ATDGLAMFIS (221 aa)) enclose the Glutamine amidotransferase type-1 domain. The active-site Nucleophile is C87. Residues H204 and E206 contribute to the active site.

In terms of assembly, part of the FGAM synthase complex composed of 1 PurL, 1 PurQ and 2 PurS subunits.

Its subcellular location is the cytoplasm. The catalysed reaction is N(2)-formyl-N(1)-(5-phospho-beta-D-ribosyl)glycinamide + L-glutamine + ATP + H2O = 2-formamido-N(1)-(5-O-phospho-beta-D-ribosyl)acetamidine + L-glutamate + ADP + phosphate + H(+). It carries out the reaction L-glutamine + H2O = L-glutamate + NH4(+). It functions in the pathway purine metabolism; IMP biosynthesis via de novo pathway; 5-amino-1-(5-phospho-D-ribosyl)imidazole from N(2)-formyl-N(1)-(5-phospho-D-ribosyl)glycinamide: step 1/2. In terms of biological role, part of the phosphoribosylformylglycinamidine synthase complex involved in the purines biosynthetic pathway. Catalyzes the ATP-dependent conversion of formylglycinamide ribonucleotide (FGAR) and glutamine to yield formylglycinamidine ribonucleotide (FGAM) and glutamate. The FGAM synthase complex is composed of three subunits. PurQ produces an ammonia molecule by converting glutamine to glutamate. PurL transfers the ammonia molecule to FGAR to form FGAM in an ATP-dependent manner. PurS interacts with PurQ and PurL and is thought to assist in the transfer of the ammonia molecule from PurQ to PurL. In Synechocystis sp. (strain ATCC 27184 / PCC 6803 / Kazusa), this protein is Phosphoribosylformylglycinamidine synthase subunit PurQ.